We begin with the raw amino-acid sequence, 525 residues long: ADP-ribosylation factor GTPase-activating protein 3 (525 aa).

Residues 10–126 form the Arf-GAP domain; that stretch reads LAIFKRLRSV…IKTLATQATR (117 aa). The segment at 25–48 adopts a C4-type zinc-finger fold; it reads CFDCGAKNPSWASISYGVFLCIDC. A disordered region spans residues 160–233; that stretch reads VSGATQASAQ…KGLGAKKGSL (74 aa). The span at 162–177 shows a compositional bias: polar residues; it reads GATQASAQPEPASSTP. A compositionally biased stretch (low complexity) spans 222-233; that stretch reads AKKGLGAKKGSL. Ser232, Ser242, Ser271, and Ser275 each carry phosphoserine. The segment at 249 to 271 is disordered; it reads QAQAVDKRKEQEDLARGTPKEES. Residues 293–305 are compositionally biased toward basic and acidic residues; sequence LNLSGQKKAEAER. 2 disordered regions span residues 293 to 364 and 377 to 428; these read LNLS…SSSR and FSSW…EAQK. Residues 319–333 show a composition bias toward polar residues; that stretch reads HSVTSDMQTIEQESP. Ser332 bears the Phosphoserine mark. Over residues 349–363 the composition is skewed to low complexity; sequence SYFSSSSKWSEQSSS. At Ser379 the chain carries Phosphoserine. The span at 387 to 398 shows a compositional bias: basic and acidic residues; sequence YWKKDSSRDPEP. Phosphoserine is present on residues Ser437, Ser460, Ser462, Ser464, Ser466, and Ser467.

The protein resides in the cytoplasm. Its subcellular location is the golgi apparatus membrane. Its activity is regulated as follows. GAP activity stimulated by phosphatidylinositol 4,5-bisphosphate (PIP2). GTPase-activating protein (GAP) for ADP ribosylation factor 1 (ARF1). Hydrolysis of ARF1-bound GTP may lead to dissociation of coatomer from Golgi-derived membranes to allow fusion with target membranes. In Rattus norvegicus (Rat), this protein is ADP-ribosylation factor GTPase-activating protein 3.